We begin with the raw amino-acid sequence, 130 residues long: Small ribosomal subunit protein uS8 (130 aa).

The protein belongs to the universal ribosomal protein uS8 family. Part of the 30S ribosomal subunit. Contacts proteins S5 and S12.

Its function is as follows. One of the primary rRNA binding proteins, it binds directly to 16S rRNA central domain where it helps coordinate assembly of the platform of the 30S subunit. The polypeptide is Small ribosomal subunit protein uS8 (Chromohalobacter salexigens (strain ATCC BAA-138 / DSM 3043 / CIP 106854 / NCIMB 13768 / 1H11)).